The primary structure comprises 106 residues: ATP-dependent Clp protease adapter protein ClpS (106 aa).

This sequence belongs to the ClpS family. Binds to the N-terminal domain of the chaperone ClpA.

Involved in the modulation of the specificity of the ClpAP-mediated ATP-dependent protein degradation. The chain is ATP-dependent Clp protease adapter protein ClpS from Erwinia tasmaniensis (strain DSM 17950 / CFBP 7177 / CIP 109463 / NCPPB 4357 / Et1/99).